Reading from the N-terminus, the 290-residue chain is D-tagatose-1,6-bisphosphate aldolase subunit KbaY (290 aa).

The active-site Proton donor is aspartate 82. Zn(2+) is bound by residues histidine 83 and histidine 180. Glycine 181 is a binding site for dihydroxyacetone phosphate. Residue histidine 208 participates in Zn(2+) binding. Dihydroxyacetone phosphate is bound by residues 209–211 (GAS) and 230–233 (NVAT).

This sequence belongs to the class II fructose-bisphosphate aldolase family. TagBP aldolase KbaY subfamily. In terms of assembly, homotetramer. Forms a complex with KbaZ. The cofactor is Zn(2+).

The catalysed reaction is D-tagatofuranose 1,6-bisphosphate = D-glyceraldehyde 3-phosphate + dihydroxyacetone phosphate. It participates in carbohydrate metabolism; D-tagatose 6-phosphate degradation; D-glyceraldehyde 3-phosphate and glycerone phosphate from D-tagatose 6-phosphate: step 2/2. Functionally, catalytic subunit of the tagatose-1,6-bisphosphate aldolase KbaYZ, which catalyzes the reversible aldol condensation of dihydroxyacetone phosphate (DHAP or glycerone-phosphate) with glyceraldehyde 3-phosphate (G3P) to produce tagatose 1,6-bisphosphate (TBP). Requires KbaZ subunit for full activity and stability. In Citrobacter koseri (strain ATCC BAA-895 / CDC 4225-83 / SGSC4696), this protein is D-tagatose-1,6-bisphosphate aldolase subunit KbaY.